The following is a 291-amino-acid chain: Phosphate import ATP-binding protein PstB (291 aa).

Basic and acidic residues predominate over residues 1–17 (MANTNVKEKELAKHTDQ). The interval 1–40 (MANTNVKEKELAKHTDQSQESISTVVSSNEVKHNKESDSN) is disordered. Residues 18–29 (SQESISTVVSSN) show a composition bias toward polar residues. Residues 30-40 (EVKHNKESDSN) are compositionally biased toward basic and acidic residues. The ABC transporter domain occupies 45-286 (YSTQNLDLWY…PSDKQTEDYI (242 aa)). Position 77–84 (77–84 (GPSGCGKS)) interacts with ATP.

Belongs to the ABC transporter superfamily. Phosphate importer (TC 3.A.1.7) family. The complex is composed of two ATP-binding proteins (PstB), two transmembrane proteins (PstC and PstA) and a solute-binding protein (PstS).

It localises to the cell membrane. The catalysed reaction is phosphate(out) + ATP + H2O = ADP + 2 phosphate(in) + H(+). Part of the ABC transporter complex PstSACB involved in phosphate import. Responsible for energy coupling to the transport system. This is Phosphate import ATP-binding protein PstB from Staphylococcus haemolyticus (strain JCSC1435).